Reading from the N-terminus, the 101-residue chain is Large ribosomal subunit protein bL28 (101 aa).

This sequence belongs to the bacterial ribosomal protein bL28 family.

The sequence is that of Large ribosomal subunit protein bL28 from Rhodopseudomonas palustris (strain BisA53).